The primary structure comprises 559 residues: Thermosome subunit alpha (559 aa).

A compositionally biased stretch (basic and acidic residues) spans 535–547 (SEKKGGEGSKEES). The interval 535–559 (SEKKGGEGSKEESGGEGGSTPSLGD) is disordered.

Belongs to the TCP-1 chaperonin family. As to quaternary structure, forms a Heterooligomeric complex of two stacked eight-membered rings.

Functionally, molecular chaperone; binds unfolded polypeptides in vitro, and has a weak ATPase activity. This is Thermosome subunit alpha (thsA) from Saccharolobus solfataricus (strain ATCC 35092 / DSM 1617 / JCM 11322 / P2) (Sulfolobus solfataricus).